Consider the following 695-residue polypeptide: Elongation factor G (695 aa).

The tr-type G domain maps to 8-282 (KDTRNIGIMA…AIVDYMPAPI (275 aa)). GTP contacts are provided by residues 17 to 24 (AHIDAGKT), 81 to 85 (DTPGH), and 135 to 138 (NKMD). The interval 285–304 (PDIKGVDPQTDEPTTRKSSD) is disordered.

This sequence belongs to the TRAFAC class translation factor GTPase superfamily. Classic translation factor GTPase family. EF-G/EF-2 subfamily.

Its subcellular location is the cytoplasm. In terms of biological role, catalyzes the GTP-dependent ribosomal translocation step during translation elongation. During this step, the ribosome changes from the pre-translocational (PRE) to the post-translocational (POST) state as the newly formed A-site-bound peptidyl-tRNA and P-site-bound deacylated tRNA move to the P and E sites, respectively. Catalyzes the coordinated movement of the two tRNA molecules, the mRNA and conformational changes in the ribosome. The polypeptide is Elongation factor G (Finegoldia magna (strain ATCC 29328 / DSM 20472 / WAL 2508) (Peptostreptococcus magnus)).